Here is an 83-residue protein sequence, read N- to C-terminus: Cytochrome b559 subunit alpha (83 aa).

A helical membrane pass occupies residues 21-35 (VIHSITIPSLFIAGW). Heme is bound at residue His23.

It belongs to the PsbE/PsbF family. As to quaternary structure, heterodimer of an alpha subunit and a beta subunit. PSII is composed of 1 copy each of membrane proteins PsbA, PsbB, PsbC, PsbD, PsbE, PsbF, PsbH, PsbI, PsbJ, PsbK, PsbL, PsbM, PsbT, PsbX, PsbY, PsbZ, Psb30/Ycf12, at least 3 peripheral proteins of the oxygen-evolving complex and a large number of cofactors. It forms dimeric complexes. It depends on heme b as a cofactor.

The protein resides in the plastid. It localises to the chloroplast thylakoid membrane. This b-type cytochrome is tightly associated with the reaction center of photosystem II (PSII). PSII is a light-driven water:plastoquinone oxidoreductase that uses light energy to abstract electrons from H(2)O, generating O(2) and a proton gradient subsequently used for ATP formation. It consists of a core antenna complex that captures photons, and an electron transfer chain that converts photonic excitation into a charge separation. This is Cytochrome b559 subunit alpha from Liriodendron tulipifera (Tuliptree).